The following is a 307-amino-acid chain: Mitochondrial 2-oxodicarboxylate carrier 2 (307 aa).

The next 6 helical transmembrane spans lie at 10 to 30 (LPFI…LTVM), 76 to 95 (SRLY…KRAT), 122 to 142 (IAAG…FELI), 171 to 191 (GLYK…GGYF), 215 to 235 (LIAG…FDVV), and 280 to 300 (CRLA…MNFF). 3 Solcar repeats span residues 10-106 (LPFI…YQKI), 116-200 (TTQK…VRNS), and 209-299 (QKTR…MMNF).

The protein belongs to the mitochondrial carrier (TC 2.A.29) family.

It localises to the mitochondrion inner membrane. Functionally, transports C5-C7 oxodicarboxylates across the inner membranes of mitochondria. Can transport 2-oxoadipate, 2-oxoglutarate, adipate, glutarate, 2-oxopimelate, oxaloacetate, citrate and malate. The main physiological role is probably to supply 2-oxoadipate and 2-oxoglutarate from the mitochondrial matrix to the cytosol where they are used in the biosynthesis of lysine and glutamate, respectively, and in lysine catabolism. The sequence is that of Mitochondrial 2-oxodicarboxylate carrier 2 (ODC2) from Saccharomyces cerevisiae (strain ATCC 204508 / S288c) (Baker's yeast).